Here is a 574-residue protein sequence, read N- to C-terminus: 2-succinyl-5-enolpyruvyl-6-hydroxy-3-cyclohexene-1-carboxylate synthase (574 aa).

The protein belongs to the TPP enzyme family. MenD subfamily. As to quaternary structure, homodimer. Requires Mg(2+) as cofactor. Mn(2+) is required as a cofactor. The cofactor is thiamine diphosphate.

It catalyses the reaction isochorismate + 2-oxoglutarate + H(+) = 5-enolpyruvoyl-6-hydroxy-2-succinyl-cyclohex-3-ene-1-carboxylate + CO2. The protein operates within quinol/quinone metabolism; 1,4-dihydroxy-2-naphthoate biosynthesis; 1,4-dihydroxy-2-naphthoate from chorismate: step 2/7. Its pathway is quinol/quinone metabolism; menaquinone biosynthesis. Functionally, catalyzes the thiamine diphosphate-dependent decarboxylation of 2-oxoglutarate and the subsequent addition of the resulting succinic semialdehyde-thiamine pyrophosphate anion to isochorismate to yield 2-succinyl-5-enolpyruvyl-6-hydroxy-3-cyclohexene-1-carboxylate (SEPHCHC). The sequence is that of 2-succinyl-5-enolpyruvyl-6-hydroxy-3-cyclohexene-1-carboxylate synthase from Rubrobacter xylanophilus (strain DSM 9941 / JCM 11954 / NBRC 16129 / PRD-1).